Reading from the N-terminus, the 417-residue chain is NADH-quinone oxidoreductase subunit D (417 aa).

This sequence belongs to the complex I 49 kDa subunit family. NDH-1 is composed of 14 different subunits. Subunits NuoB, C, D, E, F, and G constitute the peripheral sector of the complex.

It localises to the cell inner membrane. It carries out the reaction a quinone + NADH + 5 H(+)(in) = a quinol + NAD(+) + 4 H(+)(out). NDH-1 shuttles electrons from NADH, via FMN and iron-sulfur (Fe-S) centers, to quinones in the respiratory chain. The immediate electron acceptor for the enzyme in this species is believed to be ubiquinone. Couples the redox reaction to proton translocation (for every two electrons transferred, four hydrogen ions are translocated across the cytoplasmic membrane), and thus conserves the redox energy in a proton gradient. In Burkholderia lata (strain ATCC 17760 / DSM 23089 / LMG 22485 / NCIMB 9086 / R18194 / 383), this protein is NADH-quinone oxidoreductase subunit D.